The sequence spans 547 residues: DEAD-box ATP-dependent RNA helicase 31 (547 aa).

Residues 1–34 (MFDFGLSEDDSELGEVDEDDGPSGFEDDLFDDEG) are compositionally biased toward acidic residues. A disordered region spans residues 1–74 (MFDFGLSEDD…HTRESGGGDS (74 aa)). Basic and acidic residues predominate over residues 53–70 (IKGEPIDQEGVVHTRESG). The Q motif motif lies at 79–107 (TRFDECSLSPLTLKGVKAAGYERMTAVQE). The Helicase ATP-binding domain maps to 110 to 293 (LPIILKGKDV…HIAMKRDLEF (184 aa)). ATP is bound at residue 123–130 (AKTGTGKT). The short motif at 241–244 (DEAD) is the DEAD box element. The Helicase C-terminal domain maps to 327 to 478 (LLTDHISENV…TKRKVEKALA (152 aa)).

This sequence belongs to the DEAD box helicase family.

It carries out the reaction ATP + H2O = ADP + phosphate + H(+). This Oryza sativa subsp. japonica (Rice) protein is DEAD-box ATP-dependent RNA helicase 31.